The sequence spans 574 residues: Adenine deaminase (574 aa).

It belongs to the metallo-dependent hydrolases superfamily. Adenine deaminase family. Mn(2+) is required as a cofactor.

The catalysed reaction is adenine + H2O + H(+) = hypoxanthine + NH4(+). This Thermosipho melanesiensis (strain DSM 12029 / CIP 104789 / BI429) protein is Adenine deaminase.